The following is a 221-amino-acid chain: Glutathione S-transferase alpha-3 (221 aa).

A GST N-terminal domain is found at 3–83 (GKPVLHYFDG…YIATKYNLYG (81 aa)). At Lys4 the chain carries N6-succinyllysine. Residues Tyr9, Arg45, 54–55 (QV), and 67–68 (QT) each bind glutathione. A GST C-terminal domain is found at 85-207 (DMKERALIDM…LQPGSQRKPL (123 aa)).

It belongs to the GST superfamily. Alpha family. In terms of assembly, heterodimer of YC1 and YC2.

Its subcellular location is the cytoplasm. It catalyses the reaction RX + glutathione = an S-substituted glutathione + a halide anion + H(+). The catalysed reaction is androst-5-ene-3,17-dione = androst-4-ene-3,17-dione. The enzyme catalyses pregn-5-ene-3,20-dione = progesterone. Conjugation of reduced glutathione to a wide number of exogenous and endogenous hydrophobic electrophiles. Catalyzes isomerization reactions that contribute to the biosynthesis of steroid hormones. Efficiently catalyze obligatory double-bond isomerizations of delta(5)-androstene-3,17-dione and delta(5)-pregnene-3,20-dione, precursors to testosterone and progesterone, respectively. Has substantial activity toward aflatoxin B1-8,9-epoxide. The chain is Glutathione S-transferase alpha-3 from Rattus norvegicus (Rat).